Reading from the N-terminus, the 473-residue chain is Pre-mRNA-splicing factor PRP46 (473 aa).

Polar residues predominate over residues 1-10; sequence MSTSLETPSG. Disordered regions lie at residues 1 to 21 and 103 to 126; these read MSTS…VASG and GPNV…QAVA. 7 WD repeats span residues 180-219, 222-261, 264-303, 306-347, 349-388, 391-429, and 440-473; these read GHMG…LKLS, GHIS…VIRH, GHFS…NIFT, GHTS…NTLT, HKKS…FVNN, GHEA…PFQH, and DAEA…SEQA.

Belongs to the WD repeat PRL1/PRL2 family. As to quaternary structure, associated with the spliceosome.

It localises to the cytoplasm. It is found in the nucleus. In terms of biological role, involved in pre-mRNA splicing and required for cell cycle progression at G2/M. This chain is Pre-mRNA-splicing factor PRP46 (PRP46), found in Cryptococcus neoformans var. neoformans serotype D (strain JEC21 / ATCC MYA-565) (Filobasidiella neoformans).